The following is a 325-amino-acid chain: Beta-lactamase 1 (325 aa).

The N-terminal stretch at 1-26 (MRIRPTRRLLLGAVAPLALVPLVACG) is a signal peptide. The segment at 30–50 (GSESGQQPGLGGCGTSAHGSA) is disordered. The active-site Acyl-ester intermediate is Ser-93. 270 to 272 (KSG) serves as a coordination point for substrate.

This sequence belongs to the class-A beta-lactamase family.

It carries out the reaction a beta-lactam + H2O = a substituted beta-amino acid. This chain is Beta-lactamase 1 (blaL), found in Streptomyces cacaoi.